A 187-amino-acid chain; its full sequence is Elongation factor P (187 aa).

This sequence belongs to the elongation factor P family.

It localises to the cytoplasm. It participates in protein biosynthesis; polypeptide chain elongation. Involved in peptide bond synthesis. Stimulates efficient translation and peptide-bond synthesis on native or reconstituted 70S ribosomes in vitro. Probably functions indirectly by altering the affinity of the ribosome for aminoacyl-tRNA, thus increasing their reactivity as acceptors for peptidyl transferase. The sequence is that of Elongation factor P from Corynebacterium diphtheriae (strain ATCC 700971 / NCTC 13129 / Biotype gravis).